The primary structure comprises 204 residues: Casparian strip membrane protein 3 (204 aa).

The Cytoplasmic portion of the chain corresponds to Met1–Arg41. The chain crosses the membrane as a helical span at residues Gly42–Ala62. The Extracellular portion of the chain corresponds to Gly63 to Gln92. A helical membrane pass occupies residues Phe93–Val113. Topologically, residues Val114–Arg125 are cytoplasmic. The chain crosses the membrane as a helical span at residues Leu126 to Ala146. Residues Ala147–His204 lie on the Extracellular side of the membrane.

The protein belongs to the Casparian strip membrane proteins (CASP) family. In terms of assembly, homodimer and heterodimers.

Its subcellular location is the cell membrane. In terms of biological role, regulates membrane-cell wall junctions and localized cell wall deposition. Required for establishment of the Casparian strip membrane domain (CSD) and the subsequent formation of Casparian strips, a cell wall modification of the root endodermis that determines an apoplastic barrier between the intraorganismal apoplasm and the extraorganismal apoplasm and prevents lateral diffusion. The protein is Casparian strip membrane protein 3 of Raphanus sativus (Radish).